Reading from the N-terminus, the 245-residue chain is tRNA pseudouridine synthase A 2 (245 aa).

D53 serves as the catalytic Nucleophile. Y111 serves as a coordination point for substrate.

Belongs to the tRNA pseudouridine synthase TruA family. As to quaternary structure, homodimer.

The catalysed reaction is uridine(38/39/40) in tRNA = pseudouridine(38/39/40) in tRNA. In terms of biological role, formation of pseudouridine at positions 38, 39 and 40 in the anticodon stem and loop of transfer RNAs. This is tRNA pseudouridine synthase A 2 from Bacillus cereus (strain ZK / E33L).